Reading from the N-terminus, the 657-residue chain is Glycogen debranching enzyme (657 aa).

D336 serves as the catalytic Nucleophile. E371 serves as the catalytic Proton donor. The segment covering 458–467 (NEANGEENRD) has biased composition (basic and acidic residues). A disordered region spans residues 458 to 479 (NEANGEENRDGTNNNYSNNHGK).

The protein belongs to the glycosyl hydrolase 13 family.

The catalysed reaction is Hydrolysis of (1-&gt;6)-alpha-D-glucosidic linkages to branches with degrees of polymerization of three or four glucose residues in limit dextrin.. The protein operates within glycan degradation; glycogen degradation. Its function is as follows. Removes maltotriose and maltotetraose chains that are attached by 1,6-alpha-linkage to the limit dextrin main chain, generating a debranched limit dextrin. The protein is Glycogen debranching enzyme of Escherichia coli (strain SE11).